The primary structure comprises 293 residues: MARVRTLADLRTEDEADEHTPLYNAETGSRDSDSTSSGGAAPRSMPIRFLELLFPHFSLKSVVLAISIVDWIFYIVTVCLDTELPLIPAANILVHFGANYPPLIKQGQVWRLLLPVFLHANFFHVFFNVFFQLRMGFTIERRYGLLKFTGLYFASAIYGNLLSATAFFCNSLKVGASTAGFGLIGIQICEMALTWHRMRHRDRMLTNMVSFVLLMVLLMFTLNGGSIDQMGHLGGLLCGFSIGMLYNKELNDKPVWYPWASAAAIGILLALPAACFPILYAVDRHCHRDLSYI.

Residues 18 to 40 (EHTPLYNAETGSRDSDSTSSGGA) are disordered. The next 6 helical transmembrane spans lie at 62-82 (VVLA…CLDT), 112-132 (LLLP…VFFQ), 148-168 (FTGL…TAFF), 174-194 (VGAS…MALT), 217-237 (LLMF…GGLL), and 262-282 (AAAI…LYAV). Serine 177 (nucleophile) is an active-site residue. Histidine 232 is an active-site residue.

The protein belongs to the peptidase S54 family.

It localises to the cytoplasmic vesicle. The protein resides in the secretory vesicle. The protein localises to the microneme membrane. It catalyses the reaction Cleaves type-1 transmembrane domains using a catalytic dyad composed of serine and histidine that are contributed by different transmembrane domains.. Serine protease involved in intramembrane proteolysis and the subsequent release of polypeptides from their membrane anchors. Has no detectable activity towards MIC2. This chain is Rhomboid-like protease 1 (ROM1), found in Toxoplasma gondii.